The sequence spans 246 residues: ATP synthase subunit a, chloroplastic (246 aa).

The next 5 helical transmembrane spans lie at 35-55 (GQVL…GLIA), 94-114 (VPFI…GALL), 132-152 (DINT…YAGI), 198-218 (LVVG…VMLL), and 219-239 (GVFT…AYIG).

Belongs to the ATPase A chain family. As to quaternary structure, F-type ATPases have 2 components, CF(1) - the catalytic core - and CF(0) - the membrane proton channel. CF(1) has five subunits: alpha(3), beta(3), gamma(1), delta(1), epsilon(1). CF(0) has four main subunits: a, b, b' and c.

The protein localises to the plastid. It localises to the chloroplast thylakoid membrane. Functionally, key component of the proton channel; it plays a direct role in the translocation of protons across the membrane. The sequence is that of ATP synthase subunit a, chloroplastic from Stigeoclonium helveticum (Green alga).